A 1022-amino-acid polypeptide reads, in one-letter code: Sodium-dependent transporter snf-12 (1022 aa).

The Cytoplasmic portion of the chain corresponds to 1–165; that stretch reads MNGEWKSALR…RRELWRTQKD (165 aa). A helical transmembrane segment spans residues 166-185; that stretch reads FFLSCLGFMVGVGHTMRFPA. Over 186 to 192 the chain is Extracellular; it reads KVYQHGG. A helical transmembrane segment spans residues 193–213; it reads GVFFIPYLFSLIFFGLPLVFL. Residues 214–241 are Cytoplasmic-facing; it reads HLSLGQYTGQAANTAFQRLMPIGSGVGW. Residues 242–262 form a helical membrane-spanning segment; sequence ALVVIAIPVAVYYNIIVAWAI. Residues 263-337 are Extracellular-facing; sequence HYFFQSAKGL…DFALGPLQSH (75 aa). Residues 338-358 traverse the membrane as a helical segment; that stretch reads LVLSLAAAWLLVFFGVFKGLG. Position 359 (Ser359) is a topological domain, cytoplasmic. A helical transmembrane segment spans residues 360-380; sequence IAQTMNVTATVPYLLLSILLL. Residues 381–412 lie on the Extracellular side of the membrane; sequence RGISLPGANKGLTFLFTVDSTKLWKWQIWKSA. The helical transmembrane segment at 413 to 433 threads the bilayer; the sequence is AEQVFYELGIDAGPLISMAAF. Residues 434-444 lie on the Cytoplasmic side of the membrane; it reads SRYRNNIYRDS. Residues 445–465 form a helical membrane-spanning segment; the sequence is VLLVIMDALTSCLSGMVIFSF. Residues 466-498 lie on the Extracellular side of the membrane; the sequence is VGFIASESNSNVNDVLKHDPLYLSFTVYPGVTS. Residues 499–519 traverse the membrane as a helical segment; that stretch reads FMYWGGLWATLFFGMLVLAAI. At 520-550 the chain is on the cytoplasmic side; it reads DAEFAWLEMIASAFMNHFSMKNKAVENRLLA. The helical transmembrane segment at 551 to 571 threads the bilayer; it reads FLCLAGFFLGLPLCAQGGIFV. Residues 572-584 lie on the Extracellular side of the membrane; the sequence is FHAIENLNANWNS. A helical membrane pass occupies residues 585–605; that stretch reads FSLALLSVAIVCYVYGIDNYL. Over 606 to 641 the chain is Cytoplasmic; it reads TDISAMLRVPRIQISKATRLKEKLIYFFGPGGIYIK. Residues 642–662 traverse the membrane as a helical segment; that stretch reads FSLCFICPVILTVLLVASVLG. Topologically, residues 663 to 677 are extracellular; the sequence is YQRISFAGRPIPIDY. Residues 678-698 form a helical membrane-spanning segment; that stretch reads EIVAWIVMIGPLLVVPLVAFM. Residues 699-1022 are Cytoplasmic-facing; that stretch reads QIRQIRNEGK…RPKPIDMPPK (324 aa). Disordered regions lie at residues 867–948 and 995–1022; these read RIPN…SSDD and IYDQEQKNGRSKVLSQLKRPKPIDMPPK. Pro residues predominate over residues 893–907; sequence SDPPVPTSPLPPPPK. Residues 933-943 show a composition bias toward low complexity; it reads DDSPSISNSSD.

It belongs to the sodium:neurotransmitter symporter (SNF) (TC 2.A.22) family. In terms of assembly, may interact with STAT family transcription factor sta-2; the interaction is probably direct.

The protein localises to the membrane. Its subcellular location is the cytoplasm. It is found in the vesicle. Functionally, probably mediates sodium-dependent uptake of unknown small molecule(s). By positively modulating expression, in the epidermis, of antimicrobial peptides such as nlp-29, plays a role in resistance to fungal infection and in the response to physical wounding and phorbol ester PMA treatment. Role in response to wounding of the epidermis may be facilitated by recruitment of snf-12 to the wound site by microtubule-dependent vesicle trafficking. Functions cell autonomously in the epidermis, in concert with STAT transcription factor sta-2, probably acting at vesicular membranes, downstream of a p38 MAPK/pmk-1 pathway. The chain is Sodium-dependent transporter snf-12 from Caenorhabditis elegans.